Here is a 45-residue protein sequence, read N- to C-terminus: NLWQFGRVFVYPDVLCKGCYCGWGGRMDIYTYSRCCFVHDCCYGK.

Positions 20, 24, and 25 each coordinate Ca(2+). Cysteines 21 and 36 form a disulfide. His39 is an active-site residue. Asp40 contacts Ca(2+).

Ca(2+) is required as a cofactor. As to expression, expressed by the venom gland.

The protein localises to the secreted. It carries out the reaction a 1,2-diacyl-sn-glycero-3-phosphocholine + H2O = a 1-acyl-sn-glycero-3-phosphocholine + a fatty acid + H(+). In terms of biological role, PLA2 catalyzes the calcium-dependent hydrolysis of the 2-acyl groups in 3-sn-phosphoglycerides. The sequence is that of Phospholipase A2 3 from Bothrops diporus (Chaco lancehead).